Consider the following 350-residue polypeptide: Phenylalanine--tRNA ligase alpha subunit (350 aa).

A Mg(2+)-binding site is contributed by Glu260.

The protein belongs to the class-II aminoacyl-tRNA synthetase family. Phe-tRNA synthetase alpha subunit type 1 subfamily. As to quaternary structure, tetramer of two alpha and two beta subunits. The cofactor is Mg(2+).

Its subcellular location is the cytoplasm. The catalysed reaction is tRNA(Phe) + L-phenylalanine + ATP = L-phenylalanyl-tRNA(Phe) + AMP + diphosphate + H(+). In Mesoplasma florum (strain ATCC 33453 / NBRC 100688 / NCTC 11704 / L1) (Acholeplasma florum), this protein is Phenylalanine--tRNA ligase alpha subunit.